A 447-amino-acid polypeptide reads, in one-letter code: tRNA-2-methylthio-N(6)-dimethylallyladenosine synthase (447 aa).

The MTTase N-terminal domain maps to lysine 3 to glutamate 120. Residues cysteine 12, cysteine 49, cysteine 83, cysteine 157, cysteine 161, and cysteine 164 each contribute to the [4Fe-4S] cluster site. Positions arginine 143 to arginine 375 constitute a Radical SAM core domain. The TRAM domain maps to glutamate 378–glutamate 441.

It belongs to the methylthiotransferase family. MiaB subfamily. As to quaternary structure, monomer. [4Fe-4S] cluster is required as a cofactor.

The protein localises to the cytoplasm. The enzyme catalyses N(6)-dimethylallyladenosine(37) in tRNA + (sulfur carrier)-SH + AH2 + 2 S-adenosyl-L-methionine = 2-methylsulfanyl-N(6)-dimethylallyladenosine(37) in tRNA + (sulfur carrier)-H + 5'-deoxyadenosine + L-methionine + A + S-adenosyl-L-homocysteine + 2 H(+). Functionally, catalyzes the methylthiolation of N6-(dimethylallyl)adenosine (i(6)A), leading to the formation of 2-methylthio-N6-(dimethylallyl)adenosine (ms(2)i(6)A) at position 37 in tRNAs that read codons beginning with uridine. The sequence is that of tRNA-2-methylthio-N(6)-dimethylallyladenosine synthase from Legionella pneumophila (strain Paris).